A 325-amino-acid chain; its full sequence is Lipoyl synthase (325 aa).

A disordered region spans residues 1–32 (MPPLADASTETLSPAEQAAVRHPEKAHRPDQP). The segment covering 19–32 (AVRHPEKAHRPDQP) has biased composition (basic and acidic residues). The [4Fe-4S] cluster site is built by C66, C71, C77, C92, C96, C99, and S305. The Radical SAM core domain maps to 78 to 294 (WAKKHATFMI…AEVANAKGFL (217 aa)).

This sequence belongs to the radical SAM superfamily. Lipoyl synthase family. [4Fe-4S] cluster serves as cofactor.

Its subcellular location is the cytoplasm. It catalyses the reaction [[Fe-S] cluster scaffold protein carrying a second [4Fe-4S](2+) cluster] + N(6)-octanoyl-L-lysyl-[protein] + 2 oxidized [2Fe-2S]-[ferredoxin] + 2 S-adenosyl-L-methionine + 4 H(+) = [[Fe-S] cluster scaffold protein] + N(6)-[(R)-dihydrolipoyl]-L-lysyl-[protein] + 4 Fe(3+) + 2 hydrogen sulfide + 2 5'-deoxyadenosine + 2 L-methionine + 2 reduced [2Fe-2S]-[ferredoxin]. It participates in protein modification; protein lipoylation via endogenous pathway; protein N(6)-(lipoyl)lysine from octanoyl-[acyl-carrier-protein]: step 2/2. Catalyzes the radical-mediated insertion of two sulfur atoms into the C-6 and C-8 positions of the octanoyl moiety bound to the lipoyl domains of lipoate-dependent enzymes, thereby converting the octanoylated domains into lipoylated derivatives. The polypeptide is Lipoyl synthase (Beijerinckia indica subsp. indica (strain ATCC 9039 / DSM 1715 / NCIMB 8712)).